The chain runs to 173 residues: ATP synthase subunit b (173 aa).

A helical transmembrane segment spans residues 18–38 (IFWSLVILIIVAVFFYKFFLP).

It belongs to the ATPase B chain family. F-type ATPases have 2 components, F(1) - the catalytic core - and F(0) - the membrane proton channel. F(1) has five subunits: alpha(3), beta(3), gamma(1), delta(1), epsilon(1). F(0) has three main subunits: a(1), b(2) and c(10-14). The alpha and beta chains form an alternating ring which encloses part of the gamma chain. F(1) is attached to F(0) by a central stalk formed by the gamma and epsilon chains, while a peripheral stalk is formed by the delta and b chains.

Its subcellular location is the cell membrane. Its function is as follows. F(1)F(0) ATP synthase produces ATP from ADP in the presence of a proton or sodium gradient. F-type ATPases consist of two structural domains, F(1) containing the extramembraneous catalytic core and F(0) containing the membrane proton channel, linked together by a central stalk and a peripheral stalk. During catalysis, ATP synthesis in the catalytic domain of F(1) is coupled via a rotary mechanism of the central stalk subunits to proton translocation. Component of the F(0) channel, it forms part of the peripheral stalk, linking F(1) to F(0). The polypeptide is ATP synthase subunit b (Bifidobacterium adolescentis (strain ATCC 15703 / DSM 20083 / NCTC 11814 / E194a)).